We begin with the raw amino-acid sequence, 134 residues long: Interleukin-5 (134 aa).

The first 19 residues, 1–19 (MRMLLHLSLLALGAAYVYA), serve as a signal peptide directing secretion. A glycan (O-linked (GalNAc...) threonine) is linked at threonine 22. A glycan (N-linked (GlcNAc...) asparagine) is linked at asparagine 47.

Belongs to the IL-5 family. Homodimer; disulfide-linked. Interacts with IL5RA. Interacts with CSF2RB. Present in peripheral blood mononuclear cells.

Its subcellular location is the secreted. Homodimeric cytokine expressed predominantly by T-lymphocytes and NK cells that plays an important role in the survival, differentiation, and chemotaxis of eosinophils. Also acts on activated and resting B-cells to induce immunoglobulin production, growth, and differentiation. Mechanistically, exerts its biological effects through a receptor composed of IL5RA subunit and the cytokine receptor common subunit beta/CSF2RB. Binding to the receptor leads to activation of various kinases including LYN, SYK and JAK2 and thereby propagates signals through the RAS-MAPK and JAK-STAT5 pathways respectively. The polypeptide is Interleukin-5 (IL5) (Homo sapiens (Human)).